We begin with the raw amino-acid sequence, 519 residues long: UPF0053 protein bbp_300 (519 aa).

Transmembrane regions (helical) follow at residues 13–35, 48–70, 80–102, 123–145, 150–172, 185–207, and 212–231; these read LLTL…AILS, LIGL…WMVT, YFSF…FKAT, AGFW…DAII, TINN…LIAS, VVVL…ALGF, and GYLY…NQIA. CBS domains lie at 311 to 373 and 374 to 434; these read MTPR…IIDF and SSTT…DADE.

The protein belongs to the UPF0053 family.

The protein localises to the cell membrane. This chain is UPF0053 protein bbp_300, found in Buchnera aphidicola subsp. Baizongia pistaciae (strain Bp).